The primary structure comprises 164 residues: Phosphopantetheine adenylyltransferase (164 aa).

Ser10 contacts substrate. ATP contacts are provided by residues 10-11 and His18; that span reads SF. Lys42, Leu74, and Arg88 together coordinate substrate. ATP-binding positions include 89–91, Glu99, and 124–130; these read GLR and YSFLSSS.

This sequence belongs to the bacterial CoaD family. Homohexamer. It depends on Mg(2+) as a cofactor.

Its subcellular location is the cytoplasm. It carries out the reaction (R)-4'-phosphopantetheine + ATP + H(+) = 3'-dephospho-CoA + diphosphate. Its pathway is cofactor biosynthesis; coenzyme A biosynthesis; CoA from (R)-pantothenate: step 4/5. In terms of biological role, reversibly transfers an adenylyl group from ATP to 4'-phosphopantetheine, yielding dephospho-CoA (dPCoA) and pyrophosphate. This is Phosphopantetheine adenylyltransferase from Bacillus licheniformis (strain ATCC 14580 / DSM 13 / JCM 2505 / CCUG 7422 / NBRC 12200 / NCIMB 9375 / NCTC 10341 / NRRL NRS-1264 / Gibson 46).